An 80-amino-acid polypeptide reads, in one-letter code: Exodeoxyribonuclease 7 small subunit (80 aa).

The protein belongs to the XseB family. In terms of assembly, heterooligomer composed of large and small subunits.

The protein localises to the cytoplasm. It carries out the reaction Exonucleolytic cleavage in either 5'- to 3'- or 3'- to 5'-direction to yield nucleoside 5'-phosphates.. Its function is as follows. Bidirectionally degrades single-stranded DNA into large acid-insoluble oligonucleotides, which are then degraded further into small acid-soluble oligonucleotides. The sequence is that of Exodeoxyribonuclease 7 small subunit from Vibrio cholerae serotype O1 (strain ATCC 39541 / Classical Ogawa 395 / O395).